A 3068-amino-acid chain; its full sequence is Highly reducing polyketide synthase 17 (3068 aa).

The Ketosynthase family 3 (KS3) domain occupies 100 to 526; the sequence is IEPIAIVGAS…GTNAHAIMER (427 aa). Active-site for beta-ketoacyl synthase activity residues include C274, H410, and H449. Positions 627-938 are malonyl-CoA:ACP transacylase (MAT) domain; it reads YVFTGQGAQW…LAGPIRQCLA (312 aa). The For malonyltransferase activity role is filled by S721. An N-terminal hotdog fold region spans residues 1027–1160; the sequence is HHLLGVRMTE…GVVEGVMTLD (134 aa). Residues 1027–1311 form a dehydratase (DH) domain region; it reads HHLLGVRMTE…RASNIDMTIV (285 aa). The region spanning 1027–1334 is the PKS/mFAS DH domain; that stretch reads HHLLGVRMTE…SRSLAAHVDG (308 aa). H1059 functions as the Proton acceptor; for dehydratase activity in the catalytic mechanism. The tract at residues 1179–1334 is C-terminal hotdog fold; it reads NRTMVIPEEL…SRSLAAHVDG (156 aa). The active-site Proton donor; for dehydratase activity is D1247. Positions 1735-2037 are enoylreductase (ER) domain; it reads LGPVQSSKGD…LVRQGGKVIL (303 aa). The segment at 2062–2240 is catalytic ketoreductase (KR) domain; that stretch reads AAYVVAGGMG…FLSMNIGWIE (179 aa). The region spanning 2345 to 2423 is the Carrier domain; that stretch reads TIIDFISSAI…DLAEKVASRS (79 aa). The residue at position 2383 (S2383) is an O-(pantetheine 4'-phosphoryl)serine. A choline/carnitine acyltransferase (cAT) domain region spans residues 2831 to 3062; it reads FDVASLGLRS…SCMITSLLED (232 aa).

It functions in the pathway secondary metabolite biosynthesis. Highly reducing polyketide synthase; part of the gene cluster that mediates the biosynthesis of (2Z,4E,6E,10E)-9-hydroxydodeca-2,4,6,10-tetraenoic acid (BAA), (2E,4E,6E,10E)-9-hydroxydodeca-2,4,6,10-tetraenoic acid (BAB), and (2Z,4E,6E)-octa-2,4,6-trienedioic acid (PBA). The highly reducing polyketide synthase Ba17a is sufficent to produce PBA and BAA. The still to be characterized protein Ba17b leads to an increased production of BAA as well as to the production of the new compound BAB. BAA does not possess insecticidal activity against G.mellonella larvae, however, both BAA and BAB increase the growth of Candida albicans and BAA can mitigate the fungicidal effects of fluconazole over C.albicans, suggesting that generalist pathogens such as M.anisopliae, can potentially manipulate the yeast microbiota found in arthropods (and anywhere else) by the activity of compounds as BAA and BAB. This Metarhizium anisopliae (Entomophthora anisopliae) protein is Highly reducing polyketide synthase 17.